Consider the following 510-residue polypeptide: Flavonoid 3',5'-hydroxylase (510 aa).

Position 447 (cysteine 447) interacts with heme.

The protein belongs to the cytochrome P450 family. Heme is required as a cofactor.

It catalyses the reaction a 3',5'-unsubstituted flavanone + 2 reduced [NADPH--hemoprotein reductase] + 2 O2 = a 3',5'-dihydroxyflavanone + 2 oxidized [NADPH--hemoprotein reductase] + 2 H2O + 2 H(+). The protein operates within pigment biosynthesis; anthocyanin biosynthesis. Its function is as follows. Catalyzes the 3'5'-hydroxylation of naringenin and eriodictyol to form 5,7,3,'4',5'-pentahydroxyflavanone and 3',5'-hydroxylation of dihydrokaempferol and dihydroquercetin to form dihydromyricetin. This Eustoma exaltatum subsp. russellianum (Bluebells) protein is Flavonoid 3',5'-hydroxylase (CYP75A7).